We begin with the raw amino-acid sequence, 215 residues long: Probable GTP-binding protein EngB (215 aa).

Residues 31-215 (GPPEIAFAGR…RTAILQAVVQ (185 aa)) form the EngB-type G domain. Residues 39 to 46 (GRSNVGKS), 66 to 70 (GRTQE), 93 to 96 (DMPG), 160 to 163 (TKSD), and 194 to 196 (TSA) each bind GTP. The Mg(2+) site is built by Ser46 and Thr68.

The protein belongs to the TRAFAC class TrmE-Era-EngA-EngB-Septin-like GTPase superfamily. EngB GTPase family. Mg(2+) is required as a cofactor.

Necessary for normal cell division and for the maintenance of normal septation. The protein is Probable GTP-binding protein EngB of Bartonella bacilliformis (strain ATCC 35685 / KC583 / Herrer 020/F12,63).